The chain runs to 432 residues: Fibrinogen gamma chain (432 aa).

Residues 1 to 24 (MGRIGTPVFLAFLSALTCSLQVHA) form the signal peptide. The region spanning 169-412 (KISPITGKDC…MTTMKLLPMG (244 aa)) is the Fibrinogen C-terminal domain. Cys-178 and Cys-207 are oxidised to a cystine. A glycan (N-linked (GlcNAc...) asparagine) is linked at Asn-227. Ca(2+) is bound by residues Asp-340, Asp-342, Tyr-344, and Gly-346. An intrachain disulfide couples Cys-348 to Cys-361. Positions 413–432 (RDLSGHGGQQQSKGNSRGDN) are disordered. Polar residues predominate over residues 421 to 432 (QQQSKGNSRGDN).

Heterohexamer; disulfide linked. Contains 2 sets of 3 non-identical chains (alpha, beta and gamma). The 2 heterotrimers are in head to head conformation with the N-termini in a small central domain. In terms of processing, conversion of fibrinogen to fibrin is triggered by thrombin, which cleaves fibrinopeptides A and B from alpha and beta chains, and thus exposes the N-terminal polymerization sites responsible for the formation of the soft clot. The soft clot is converted into the hard clot by factor XIIIA which catalyzes the epsilon-(gamma-glutamyl)lysine cross-linking between gamma chains (stronger) and between alpha chains (weaker) of different monomers.

The protein localises to the secreted. Functionally, together with fibrinogen alpha (FGA) and fibrinogen beta (FGB), polymerizes to form an insoluble fibrin matrix. Has a major function in hemostasis as one of the primary components of blood clots. This is Fibrinogen gamma chain (FGG) from Petromyzon marinus (Sea lamprey).